The chain runs to 330 residues: D-lactate dehydrogenase (330 aa).

NAD(+) is bound by residues 156–157 (RI), Asp-176, 206–207 (VP), 233–235 (AAR), and Asp-259. Arg-235 is an active-site residue. The active site involves Glu-264. Catalysis depends on His-296, which acts as the Proton donor.

It belongs to the D-isomer specific 2-hydroxyacid dehydrogenase family.

It catalyses the reaction (R)-lactate + NAD(+) = pyruvate + NADH + H(+). The chain is D-lactate dehydrogenase (ldhD) from Staphylococcus aureus (strain MSSA476).